A 545-amino-acid polypeptide reads, in one-letter code: CTP synthase (545 aa).

Positions 1-266 (MTTNYIFVTG…DDYICKRFSL (266 aa)) are amidoligase domain. S14 contributes to the CTP binding site. S14 is a binding site for UTP. ATP-binding positions include 15 to 20 (SLGKGI) and D72. Mg(2+) is bound by residues D72 and E140. CTP-binding positions include 147-149 (DIE), 187-192 (KTKPTQ), and K223. UTP contacts are provided by residues 187–192 (KTKPTQ) and K223. Residue 239–241 (KDV) coordinates ATP. Residues 291–542 (TIGMVGKYIE…VKAASEYQKR (252 aa)) form the Glutamine amidotransferase type-1 domain. Position 352 (G352) interacts with L-glutamine. Residue C379 is the Nucleophile; for glutamine hydrolysis of the active site. L-glutamine is bound by residues 380-383 (LGMQ), E403, and R470. Residues H515 and E517 contribute to the active site.

This sequence belongs to the CTP synthase family. In terms of assembly, homotetramer.

The catalysed reaction is UTP + L-glutamine + ATP + H2O = CTP + L-glutamate + ADP + phosphate + 2 H(+). It carries out the reaction L-glutamine + H2O = L-glutamate + NH4(+). The enzyme catalyses UTP + NH4(+) + ATP = CTP + ADP + phosphate + 2 H(+). It participates in pyrimidine metabolism; CTP biosynthesis via de novo pathway; CTP from UDP: step 2/2. Its activity is regulated as follows. Allosterically activated by GTP, when glutamine is the substrate; GTP has no effect on the reaction when ammonia is the substrate. The allosteric effector GTP functions by stabilizing the protein conformation that binds the tetrahedral intermediate(s) formed during glutamine hydrolysis. Inhibited by the product CTP, via allosteric rather than competitive inhibition. Catalyzes the ATP-dependent amination of UTP to CTP with either L-glutamine or ammonia as the source of nitrogen. Regulates intracellular CTP levels through interactions with the four ribonucleotide triphosphates. The chain is CTP synthase from Cronobacter sakazakii (strain ATCC BAA-894) (Enterobacter sakazakii).